The chain runs to 274 residues: Chemotaxis protein methyltransferase 1 (274 aa).

One can recognise a CheR-type methyltransferase domain in the interval 1 to 274 (MSAANADFEL…CSPGIIYRAK (274 aa)). Residues asparagine 72, threonine 74, arginine 78, glutamate 115, aspartate 144, 200 to 201 (NL), and 217 to 218 (RN) each bind S-adenosyl-L-methionine.

The enzyme catalyses L-glutamyl-[protein] + S-adenosyl-L-methionine = [protein]-L-glutamate 5-O-methyl ester + S-adenosyl-L-homocysteine. Functionally, methylation of the membrane-bound methyl-accepting chemotaxis proteins (MCP) to form gamma-glutamyl methyl ester residues in MCP. In Pseudomonas aeruginosa (strain ATCC 15692 / DSM 22644 / CIP 104116 / JCM 14847 / LMG 12228 / 1C / PRS 101 / PAO1), this protein is Chemotaxis protein methyltransferase 1 (cheR1).